Reading from the N-terminus, the 646-residue chain is Peptidylprolyl isomerase domain and WD repeat-containing protein 1 (646 aa).

Residues 1–30 (MAAESGSDFQQRRRRRRDPEEPEKTELSER) are disordered. N-acetylalanine is present on A2. Residues 17 to 30 (RDPEEPEKTELSER) are compositionally biased toward basic and acidic residues. WD repeat units follow at residues 80–118 (ASMYERSYMHRDVITHVVCTKTDFIITASHDGHVKFWKK), 124–162 (EFVKHFRSHLGVIESIAVSSEGALFCSVGDDKAMKVFDV), 168–208 (INML…IYDG), 213–252 (QPLHIFDKLHTSPLTQIRLNPVYKAVVSSDKSGMIEYWTG), 271–309 (TDLYEFAKCKAYPTSVCFSPDGKKIATIGSDRKVRIFRF), 345–386 (AVER…VETN), and 401–453 (MQLA…MFTK). Residues 455 to 478 (EPEDTKSADSDRDVFNEKPSKEEV) are compositionally biased toward basic and acidic residues. Residues 455–490 (EPEDTKSADSDRDVFNEKPSKEEVMAATQAEGPKRV) are disordered. A PPIase cyclophilin-type domain is found at 490–645 (VSDSAIIHTS…EDVSIINITV (156 aa)).

The protein belongs to the cyclophilin-type PPIase family. PPIL1 subfamily. As to quaternary structure, identified in the spliceosome C complex.

The protein resides in the nucleus. It catalyses the reaction [protein]-peptidylproline (omega=180) = [protein]-peptidylproline (omega=0). Inhibited by cyclosporin A (CsA). PPIase that catalyzes the cis-trans isomerization of proline imidic peptide bonds in oligopeptides and may therefore assist protein folding. May be involved in pre-mRNA splicing. The polypeptide is Peptidylprolyl isomerase domain and WD repeat-containing protein 1 (Homo sapiens (Human)).